The primary structure comprises 303 residues: Histone deacetylase HDT2 (303 aa).

A compositionally biased stretch (acidic residues) spans 100 to 112 (EMDLDSEDEEEEL). The segment at 100-282 (EMDLDSEDEE…SGGSVPCKSC (183 aa)) is disordered. Over residues 119-133 (ENGKADGKEEQKNQE) the composition is skewed to basic and acidic residues. Residues 154–203 (DSDDSDEDESDDSDEDDSDDSDEGEGLSPDEGDDDSSDEDDTSDDDEEET) show a composition bias toward acidic residues. The segment covering 204–217 (PTPKKPEAGKKRGA) has biased composition (basic and acidic residues). Residues 277-300 (VPCKSCSKTFNSEMALQAHSKAKH) form a C2H2-type zinc finger.

Belongs to the histone deacetylase HD2 family. As to quaternary structure, multimer. Possibly forms a homotrimer with HDT1 and/or HDT3.

The protein localises to the nucleus. It localises to the nucleolus. Functionally, mediates the deacetylation of lysine residues on the N-terminal part of the core histones (H2A, H2B, H3 and H4). Histone deacetylation gives a tag for epigenetic repression and plays an important role in transcriptional regulation, cell cycle progression and developmental events. This Zea mays (Maize) protein is Histone deacetylase HDT2 (HDT2).